We begin with the raw amino-acid sequence, 43 residues long: Protein PsbN (43 aa).

A helical transmembrane segment spans residues 5–27 (TVFSIFISCLLLSLTGYSLYTAF).

It belongs to the PsbN family.

Its subcellular location is the plastid. The protein resides in the chloroplast thylakoid membrane. Functionally, may play a role in photosystem I and II biogenesis. This is Protein PsbN from Chlorokybus atmophyticus (Soil alga).